Consider the following 406-residue polypeptide: ATP synthase subunit a (406 aa).

2 stretches are compositionally biased toward low complexity: residues 22–31 (AGEHGAPAPE) and 43–59 (DAAG…AEHG). Residues 22 to 76 (AGEHGAPAPEVATPAEGHGARDAAGAATDPHGAAAEHGAAAHEDPAQHGAAGAEA) form a disordered region. 6 consecutive transmembrane segments (helical) span residues 151–171 (KHVV…FAAV), 209–229 (FVPY…FGLV), 232–252 (AATA…TFLI), 278–298 (LWPL…TKPF), 304–324 (LFAN…LIFA), and 351–371 (VQAY…VAHH). Residues 375 to 406 (DEHEEHGHGAAATGGAHGSHGSHVAGASPGHG) form a disordered region. Residues 383-406 (GAAATGGAHGSHGSHVAGASPGHG) are compositionally biased toward low complexity.

This sequence belongs to the ATPase A chain family. In terms of assembly, F-type ATPases have 2 components, CF(1) - the catalytic core - and CF(0) - the membrane proton channel. CF(1) has five subunits: alpha(3), beta(3), gamma(1), delta(1), epsilon(1). CF(0) has three main subunits: a(1), b(2) and c(9-12). The alpha and beta chains form an alternating ring which encloses part of the gamma chain. CF(1) is attached to CF(0) by a central stalk formed by the gamma and epsilon chains, while a peripheral stalk is formed by the delta and b chains.

Its subcellular location is the cell inner membrane. Key component of the proton channel; it plays a direct role in the translocation of protons across the membrane. The polypeptide is ATP synthase subunit a (Anaeromyxobacter sp. (strain Fw109-5)).